We begin with the raw amino-acid sequence, 739 residues long: Photosystem I P700 chlorophyll a apoprotein A1 (739 aa).

The next 8 helical transmembrane spans lie at 61–84 (IFSAHFGHLAVVFVWLSGMYFHGA), 147–170 (LYVTAIGGLVMAALMVFAGWFHYH), 186–210 (MNHHLSVLLGCGSLGWTGHLIHVSL), 281–299 (VAHHHLAIAVLFIIAGHMY), 336–359 (WHAQLAVNLALLGSLTIVIAHHMY), 375–401 (LSLFTHHTWIGGFLIVGAGAHGAIFMV), 423–445 (AIISHLNWVCIFLGFHSFGLYIH), and 520–538 (FMVHHIHAFTIHVTVLILL). [4Fe-4S] cluster contacts are provided by cysteine 562 and cysteine 571. 2 consecutive transmembrane segments (helical) span residues 578-599 (HVFLGLFWMYNSLSIVIFHFSW) and 653-675 (LSAYGIMFLAGHFVFAFSLMFLF). Histidine 664 lines the chlorophyll a' pocket. Positions 672 and 680 each coordinate chlorophyll a. Phylloquinone is bound at residue tryptophan 681. A helical transmembrane segment spans residues 713–733 (AVGVAHYLLGGIVTTWAFFLA).

Belongs to the PsaA/PsaB family. In terms of assembly, the PsaA/B heterodimer binds the P700 chlorophyll special pair and subsequent electron acceptors. PSI consists of a core antenna complex that captures photons, and an electron transfer chain that converts photonic excitation into a charge separation. The cyanobacterial PSI reaction center is composed of one copy each of PsaA,B,C,D,E,F,I,J,K,L,M and X, and forms trimeric complexes. PSI electron transfer chain: 5 chlorophyll a, 1 chlorophyll a', 2 phylloquinones and 3 4Fe-4S clusters. PSI core antenna: 90 chlorophyll a, 22 carotenoids, 3 phospholipids and 1 galactolipid. P700 is a chlorophyll a/chlorophyll a' dimer, A0 is one or more chlorophyll a, A1 is one or both phylloquinones and FX is a shared 4Fe-4S iron-sulfur center. is required as a cofactor.

The protein localises to the cellular thylakoid membrane. It catalyses the reaction reduced [plastocyanin] + hnu + oxidized [2Fe-2S]-[ferredoxin] = oxidized [plastocyanin] + reduced [2Fe-2S]-[ferredoxin]. In terms of biological role, psaA and PsaB bind P700, the primary electron donor of photosystem I (PSI), as well as the electron acceptors A0, A1 and FX. PSI is a plastocyanin/cytochrome c6-ferredoxin oxidoreductase, converting photonic excitation into a charge separation, which transfers an electron from the donor P700 chlorophyll pair to the spectroscopically characterized acceptors A0, A1, FX, FA and FB in turn. Oxidized P700 is reduced on the lumenal side of the thylakoid membrane by plastocyanin or cytochrome c6. The chain is Photosystem I P700 chlorophyll a apoprotein A1 from Picosynechococcus sp. (strain ATCC 27264 / PCC 7002 / PR-6) (Agmenellum quadruplicatum).